The sequence spans 255 residues: Trypsin alpha-4 (255 aa).

The signal sequence occupies residues 1 to 16 (MLKFVVLLCAISCALG). Residues 17-30 (AAVPEGMVPQLDGR) constitute a propeptide, activation peptide. A Peptidase S1 domain is found at 31–253 (IVGGVATTIS…LRTWVVSAAS (223 aa)). Cys-56 and Cys-72 are joined by a disulfide. Residues His-71 and Asp-116 each act as charge relay system in the active site. 2 disulfide bridges follow: Cys-179–Cys-196 and Cys-205–Cys-229. Ser-209 serves as the catalytic Charge relay system.

This sequence belongs to the peptidase S1 family.

It is found in the secreted. Its subcellular location is the extracellular space. It carries out the reaction Preferential cleavage: Arg-|-Xaa, Lys-|-Xaa.. This is Trypsin alpha-4 from Lucilia cuprina (Green bottle fly).